The sequence spans 426 residues: Testicular acid phosphatase (426 aa).

The first 26 residues, 1–26, serve as a signal peptide directing secretion; the sequence is MAGLGFWGHPAGPLLLLLLLVLPPRA. Topologically, residues 27-393 are extracellular; it reads LPEGPLVFVA…AAIPPAPVVP (367 aa). His-41 acts as the Nucleophile in catalysis. Intrachain disulfides connect Cys-159-Cys-378, Cys-214-Cys-312, and Cys-353-Cys-357. Residues Asn-191 and Asn-269 are each glycosylated (N-linked (GlcNAc...) asparagine). Residue Asp-289 is the Proton donor of the active site. N-linked (GlcNAc...) asparagine glycosylation is found at Asn-330 and Asn-339. Residues 394-414 form a helical membrane-spanning segment; that stretch reads LLAGAVAVLVALSLGLGLLAW. At 415 to 426 the chain is on the cytoplasmic side; that stretch reads RPGCLRALGGPV.

It belongs to the histidine acid phosphatase family. As to quaternary structure, homodimer. Glycosylated. As to expression, expressed mainly in the testis. Also expressed in the brain where they are enriched at the postsynaptic sites. Expressed at lower levels in the trachea, prostate, bone marrow, spinal cord, colon, fetal brain, heart, thymus, fetal liver, spleen, leukocytes, ovary, small intestine, pancreas and skeletal muscle. Expression is significantly lower in testicular cancer tissues than in normal testicular tissues. Isoform 3 is expressed in the testis, trachea, prostate and bone marrow.

The protein localises to the membrane. The catalysed reaction is a phosphate monoester + H2O = an alcohol + phosphate. In terms of biological role, may dephosphorylate receptor tyrosine-protein kinase ERBB4 and inhibits its ligand-induced proteolytic cleavage. May play a role in odontogenesis. This Homo sapiens (Human) protein is Testicular acid phosphatase.